Reading from the N-terminus, the 398-residue chain is Lysophospholipid transporter LplT (398 aa).

A run of 12 helical transmembrane segments spans residues methionine 16–alanine 36, isoleucine 53–alanine 73, alanine 91–valine 111, leucine 139–alanine 159, isoleucine 163–tyrosine 183, serine 195–tryptophan 213, leucine 227–leucine 247, alanine 253–alanine 273, methionine 286–phenylalanine 306, alanine 310–leucine 330, isoleucine 344–leucine 364, and valine 372–leucine 392.

This sequence belongs to the major facilitator superfamily. LplT (TC 2.A.1.42) family.

It is found in the cell inner membrane. Functionally, catalyzes the facilitated diffusion of 2-acyl-glycero-3-phosphoethanolamine (2-acyl-GPE) into the cell. The chain is Lysophospholipid transporter LplT from Serratia proteamaculans (strain 568).